The primary structure comprises 196 residues: Small heat shock protein C3 (196 aa).

The 109-residue stretch at 88–196 (SAYSSSAIRT…EKDAKEIPIQ (109 aa)) folds into the sHSP domain.

The protein belongs to the small heat shock protein (HSP20) family.

The protein is Small heat shock protein C3 (hspc3-1) of Rickettsia felis (strain ATCC VR-1525 / URRWXCal2) (Rickettsia azadi).